A 509-amino-acid chain; its full sequence is Ribonuclease Y (509 aa).

A helical transmembrane segment spans residues 5–25 (IIILLSVFCGIFFICFIICSS). Positions 199–259 (TTNIVKLPSD…IRREIATRTL (61 aa)) constitute a KH domain. The 94-residue stretch at 325 to 418 (VLAHSIEVAK…VAIADSISAS (94 aa)) folds into the HD domain.

It belongs to the RNase Y family.

The protein resides in the cell membrane. Its function is as follows. Endoribonuclease that initiates mRNA decay. The polypeptide is Ribonuclease Y (Mycoplasma capricolum subsp. capricolum (strain California kid / ATCC 27343 / NCTC 10154)).